The sequence spans 352 residues: Phenylalanine--tRNA ligase alpha subunit (352 aa).

Glutamate 258 contributes to the Mg(2+) binding site.

It belongs to the class-II aminoacyl-tRNA synthetase family. Phe-tRNA synthetase alpha subunit type 1 subfamily. In terms of assembly, tetramer of two alpha and two beta subunits. It depends on Mg(2+) as a cofactor.

It is found in the cytoplasm. It carries out the reaction tRNA(Phe) + L-phenylalanine + ATP = L-phenylalanyl-tRNA(Phe) + AMP + diphosphate + H(+). The chain is Phenylalanine--tRNA ligase alpha subunit from Staphylococcus aureus (strain Mu3 / ATCC 700698).